We begin with the raw amino-acid sequence, 595 residues long: Alpha-1,3-galactosidase B (595 aa).

Positions 1 to 22 are cleaved as a signal peptide; that stretch reads MKTILLFALSLLLSLSVSDVCA. 3 PbH1 repeats span residues 432 to 454, 455 to 477, and 488 to 541; these read TPEV…LFST, PKKT…LLCG, and CRDV…VIED.

The protein belongs to the glycosyl hydrolase 110 family. B subfamily.

It catalyses the reaction Hydrolysis of terminal, non-reducing branched (1-&gt;3)-alpha-D-galactosidic residues, producing free D-galactose.. The enzyme catalyses Hydrolysis of terminal, non-reducing linear (1-&gt;3)-alpha-D-galactosidic residues, producing free D-galactose.. It carries out the reaction Hydrolysis of terminal, non-reducing alpha-D-galactose residues in alpha-D-galactosides, including galactose oligosaccharides, galactomannans and galactolipids.. In terms of biological role, alpha-galactosidase. Removes both branched alpha-1,3-linked galactose residues of blood group B antigens and linear alpha-1,3-linked galactose structures. The sequence is that of Alpha-1,3-galactosidase B (glaB) from Bacteroides fragilis (strain ATCC 25285 / DSM 2151 / CCUG 4856 / JCM 11019 / LMG 10263 / NCTC 9343 / Onslow / VPI 2553 / EN-2).